The primary structure comprises 279 residues: Biotin synthase (279 aa).

A Radical SAM core domain is found at 2–228 (KTIMLCAISS…NARIMIAGGR (227 aa)). The [4Fe-4S] cluster site is built by Cys-17, Cys-21, and Cys-24. [2Fe-2S] cluster-binding residues include Cys-61, Cys-96, Cys-154, and Arg-221.

It belongs to the radical SAM superfamily. Biotin synthase family. As to quaternary structure, homodimer. [4Fe-4S] cluster is required as a cofactor. Requires [2Fe-2S] cluster as cofactor.

The enzyme catalyses (4R,5S)-dethiobiotin + (sulfur carrier)-SH + 2 reduced [2Fe-2S]-[ferredoxin] + 2 S-adenosyl-L-methionine = (sulfur carrier)-H + biotin + 2 5'-deoxyadenosine + 2 L-methionine + 2 oxidized [2Fe-2S]-[ferredoxin]. The protein operates within cofactor biosynthesis; biotin biosynthesis; biotin from 7,8-diaminononanoate: step 2/2. Its function is as follows. Catalyzes the conversion of dethiobiotin (DTB) to biotin by the insertion of a sulfur atom into dethiobiotin via a radical-based mechanism. The sequence is that of Biotin synthase from Campylobacter curvus (strain 525.92).